A 639-amino-acid chain; its full sequence is Threonine--tRNA ligase (639 aa).

Residues 1–61 (MIHITLPDGS…TQDSPLSIVT (61 aa)) enclose the TGS domain. The segment at 242-533 (DHRKLGRELD…LIEEHAGALP (292 aa)) is catalytic. Residues Cys333, His384, and His510 each coordinate Zn(2+).

It belongs to the class-II aminoacyl-tRNA synthetase family. Homodimer. Zn(2+) serves as cofactor.

The protein localises to the cytoplasm. It carries out the reaction tRNA(Thr) + L-threonine + ATP = L-threonyl-tRNA(Thr) + AMP + diphosphate + H(+). In terms of biological role, catalyzes the attachment of threonine to tRNA(Thr) in a two-step reaction: L-threonine is first activated by ATP to form Thr-AMP and then transferred to the acceptor end of tRNA(Thr). Also edits incorrectly charged L-seryl-tRNA(Thr). The protein is Threonine--tRNA ligase of Acidovorax ebreus (strain TPSY) (Diaphorobacter sp. (strain TPSY)).